The chain runs to 148 residues: Small ribosomal subunit protein uS15 (148 aa).

The span at 1–14 shows a compositional bias: basic residues; the sequence is MGRLHSHRHGKSHS. The tract at residues 1–27 is disordered; sequence MGRLHSHRHGKSHSIRPSSPKAPSWIQ.

It belongs to the universal ribosomal protein uS15 family. In terms of assembly, part of the 30S ribosomal subunit.

This chain is Small ribosomal subunit protein uS15, found in Cenarchaeum symbiosum (strain A).